The following is a 198-amino-acid chain: Probable opine utilization operon repressor (198 aa).

The protein operates within opine metabolism; mannopine biosynthesis [regulation]. In terms of biological role, possible repressor for genes for mannityl-opine utilization and / or plasmid conjugative transfer. This is Probable opine utilization operon repressor (opnR) from Rhizobium rhizogenes (Agrobacterium rhizogenes).